Reading from the N-terminus, the 220-residue chain is Ribose-5-phosphate isomerase A (220 aa).

Substrate-binding positions include 25 to 28, 80 to 83, and 93 to 96; these read TGST, DGAD, and KGGG. Residue Glu102 is the Proton acceptor of the active site. Lys120 serves as a coordination point for substrate.

It belongs to the ribose 5-phosphate isomerase family. Homodimer.

It catalyses the reaction aldehydo-D-ribose 5-phosphate = D-ribulose 5-phosphate. It functions in the pathway carbohydrate degradation; pentose phosphate pathway; D-ribose 5-phosphate from D-ribulose 5-phosphate (non-oxidative stage): step 1/1. Catalyzes the reversible conversion of ribose-5-phosphate to ribulose 5-phosphate. In Bacillus cereus (strain ZK / E33L), this protein is Ribose-5-phosphate isomerase A.